A 378-amino-acid chain; its full sequence is 2-aminoethylphosphonate--pyruvate transaminase 1 (378 aa).

Position 194 is an N6-(pyridoxal phosphate)lysine (Lys-194).

The protein belongs to the class-V pyridoxal-phosphate-dependent aminotransferase family. PhnW subfamily. In terms of assembly, homodimer. Pyridoxal 5'-phosphate is required as a cofactor.

It catalyses the reaction (2-aminoethyl)phosphonate + pyruvate = phosphonoacetaldehyde + L-alanine. Functionally, involved in phosphonate degradation. This chain is 2-aminoethylphosphonate--pyruvate transaminase 1, found in Cupriavidus pinatubonensis (strain JMP 134 / LMG 1197) (Cupriavidus necator (strain JMP 134)).